A 195-amino-acid chain; its full sequence is Imidazoleglycerol-phosphate dehydratase (195 aa).

This sequence belongs to the imidazoleglycerol-phosphate dehydratase family.

It localises to the cytoplasm. The catalysed reaction is D-erythro-1-(imidazol-4-yl)glycerol 3-phosphate = 3-(imidazol-4-yl)-2-oxopropyl phosphate + H2O. The protein operates within amino-acid biosynthesis; L-histidine biosynthesis; L-histidine from 5-phospho-alpha-D-ribose 1-diphosphate: step 6/9. This is Imidazoleglycerol-phosphate dehydratase from Campylobacter concisus (strain 13826).